The following is a 134-amino-acid chain: RxLR effector protein 4 (134 aa).

Residues M1–A22 form the signal peptide. Residues A43–Q65 are disordered. Over residues D48–D58 the composition is skewed to basic and acidic residues. The short motif at R52–R71 is the RxLR-dEER element.

Belongs to the RxLR effector family.

The protein localises to the secreted. In terms of biological role, effector that enhances plant susceptibility to P.parasitica in Nicotiana benthamiana and Arabidopsis thaliana. Triggers non-specific cell death in a variety of plants, including tobacco, tomato, potato and A.thaliana. E4-induced cell death is dependent on HSP90, NPK and SGT1, suggesting that PpE4 is recognized by the plant immune system. This is RxLR effector protein 4 from Phytophthora nicotianae (strain INRA-310) (Phytophthora parasitica).